Consider the following 424-residue polypeptide: Folate-like transporter 3 (424 aa).

A glycan (N-linked (GlcNAc...) asparagine) is linked at asparagine 35. Helical transmembrane passes span 55-75, 78-98, 101-119, 136-156, and 164-184; these read VALI…ILII, LSYF…CMQL, LFYG…YIYV, ALLV…GLNW, and IINL…PHVP. An N-linked (GlcNAc...) asparagine glycan is attached at asparagine 254. A run of 3 helical transmembrane segments spans residues 313–333, 361–381, and 392–412; these read GLLF…CYII, LFGI…AIVI, and FVVY…IFGI.

This sequence belongs to the reduced folate carrier (RFC) transporter (TC 2.A.48) family.

It localises to the membrane. The polypeptide is Folate-like transporter 3 (folt-3) (Caenorhabditis elegans).